The chain runs to 192 residues: ATP synthase subunit b 2 (192 aa).

Residues 39-59 (SGFLAQLIWLALAFGLLYYLM) traverse the membrane as a helical segment.

Belongs to the ATPase B chain family. In terms of assembly, F-type ATPases have 2 components, F(1) - the catalytic core - and F(0) - the membrane proton channel. F(1) has five subunits: alpha(3), beta(3), gamma(1), delta(1), epsilon(1). F(0) has three main subunits: a(1), b(2) and c(10-14). The alpha and beta chains form an alternating ring which encloses part of the gamma chain. F(1) is attached to F(0) by a central stalk formed by the gamma and epsilon chains, while a peripheral stalk is formed by the delta and b chains.

It localises to the cell inner membrane. Functionally, f(1)F(0) ATP synthase produces ATP from ADP in the presence of a proton or sodium gradient. F-type ATPases consist of two structural domains, F(1) containing the extramembraneous catalytic core and F(0) containing the membrane proton channel, linked together by a central stalk and a peripheral stalk. During catalysis, ATP synthesis in the catalytic domain of F(1) is coupled via a rotary mechanism of the central stalk subunits to proton translocation. Its function is as follows. Component of the F(0) channel, it forms part of the peripheral stalk, linking F(1) to F(0). The b'-subunit is a diverged and duplicated form of b found in plants and photosynthetic bacteria. The polypeptide is ATP synthase subunit b 2 (atpF2) (Methylobacterium radiotolerans (strain ATCC 27329 / DSM 1819 / JCM 2831 / NBRC 15690 / NCIMB 10815 / 0-1)).